The primary structure comprises 209 residues: Large ribosomal subunit protein uL4 (209 aa).

This sequence belongs to the universal ribosomal protein uL4 family. As to quaternary structure, part of the 50S ribosomal subunit.

In terms of biological role, one of the primary rRNA binding proteins, this protein initially binds near the 5'-end of the 23S rRNA. It is important during the early stages of 50S assembly. It makes multiple contacts with different domains of the 23S rRNA in the assembled 50S subunit and ribosome. Forms part of the polypeptide exit tunnel. This Borrelia duttonii (strain Ly) protein is Large ribosomal subunit protein uL4.